The following is a 776-amino-acid chain: Conserved oligomeric Golgi complex subunit 4 (776 aa).

A phosphoserine mark is found at Ser-342 and Ser-345.

It belongs to the COG4 family. As to quaternary structure, component of the conserved oligomeric Golgi complex which is composed of eight different subunits and is required for normal Golgi morphology and localization.

It localises to the golgi apparatus membrane. Its function is as follows. Required for normal Golgi function. In Drosophila melanogaster (Fruit fly), this protein is Conserved oligomeric Golgi complex subunit 4.